The chain runs to 272 residues: Dermonecrotic toxin SpeSicTox-betaIB2b (272 aa).

His5 is an active-site residue. Residues Glu25 and Asp27 each coordinate Mg(2+). Residue His41 is the Nucleophile of the active site. Intrachain disulfides connect Cys45/Cys51 and Cys47/Cys191. Residue Asp85 participates in Mg(2+) binding.

Belongs to the arthropod phospholipase D family. Class II subfamily. It depends on Mg(2+) as a cofactor. In terms of tissue distribution, expressed by the venom gland.

It localises to the secreted. It carries out the reaction an N-(acyl)-sphingosylphosphocholine = an N-(acyl)-sphingosyl-1,3-cyclic phosphate + choline. The catalysed reaction is an N-(acyl)-sphingosylphosphoethanolamine = an N-(acyl)-sphingosyl-1,3-cyclic phosphate + ethanolamine. The enzyme catalyses a 1-acyl-sn-glycero-3-phosphocholine = a 1-acyl-sn-glycero-2,3-cyclic phosphate + choline. It catalyses the reaction a 1-acyl-sn-glycero-3-phosphoethanolamine = a 1-acyl-sn-glycero-2,3-cyclic phosphate + ethanolamine. In terms of biological role, dermonecrotic toxins cleave the phosphodiester linkage between the phosphate and headgroup of certain phospholipids (sphingolipid and lysolipid substrates), forming an alcohol (often choline) and a cyclic phosphate. This toxin acts on sphingomyelin (SM). It may also act on ceramide phosphoethanolamine (CPE), lysophosphatidylcholine (LPC) and lysophosphatidylethanolamine (LPE), but not on lysophosphatidylserine (LPS), and lysophosphatidylglycerol (LPG). It acts by transphosphatidylation, releasing exclusively cyclic phosphate products as second products. Induces dermonecrosis, hemolysis, increased vascular permeability, edema, inflammatory response, and platelet aggregation. In Sicarius peruensis (Six-eyed sand spider), this protein is Dermonecrotic toxin SpeSicTox-betaIB2b.